We begin with the raw amino-acid sequence, 388 residues long: F-box protein ETP2 (388 aa).

Positions 2-48 constitute an F-box domain; that stretch reads KTIQEQLPNDLVEEILCRVPATSLRRLRSTCKAWNRLFKGDRILASK.

As to quaternary structure, interacts with EIN2 (via C-terminus).

In terms of biological role, negative regulator of EIN2 protein stability. The polypeptide is F-box protein ETP2 (Arabidopsis thaliana (Mouse-ear cress)).